The following is a 159-amino-acid chain: Ribosomal RNA large subunit methyltransferase H (159 aa).

Residues glycine 108 and 127-132 (FGKLTM) contribute to the S-adenosyl-L-methionine site.

Belongs to the RNA methyltransferase RlmH family. In terms of assembly, homodimer.

Its subcellular location is the cytoplasm. It catalyses the reaction pseudouridine(1915) in 23S rRNA + S-adenosyl-L-methionine = N(3)-methylpseudouridine(1915) in 23S rRNA + S-adenosyl-L-homocysteine + H(+). In terms of biological role, specifically methylates the pseudouridine at position 1915 (m3Psi1915) in 23S rRNA. The protein is Ribosomal RNA large subunit methyltransferase H of Lactobacillus acidophilus (strain ATCC 700396 / NCK56 / N2 / NCFM).